The primary structure comprises 260 residues: LIM and SH3 domain protein 1 (260 aa).

Met1 is subject to N-acetylmethionine. The LIM zinc-binding domain occupies 5–56 (CARCCKIVYPTEKVNCLDKFWHKACFHCETCKMTLNMKNYKGYEKKPYCNAH). Lys42 is modified (N6-acetyllysine). Nebulin repeat units follow at residues 61–95 (SFTMVADTPENLRLKQQSELQSQVRYKEEFEKNKG) and 97–131 (GFSVVADTPELQRIKKTQDQISNIKYHEEFEKSRM). A Phosphothreonine modification is found at Thr68. Lys75 is subject to N6-methyllysine. The residue at position 99 (Ser99) is a Phosphoserine. Thr104 is modified (phosphothreonine). Lys112 carries the N6-succinyllysine modification. Ser118 and Ser134 each carry phosphoserine. The disordered stretch occupies residues 123 to 204 (HEEFEKSRMG…QRSAPGGGGK (82 aa)). The segment covering 140–155 (ECERRDPQESSYRRPQ) has biased composition (basic and acidic residues). The span at 171-180 (QQPQQQPAAQ) shows a compositional bias: low complexity. An SH3 domain is found at 201–260 (GGGKRYRAVYDYSAADEDEVSFQDGDTIVNVQQIDDGWMYGTVERTGDTGMLPANYVEAI).

Interacts with F-actin. Interacts with ANKRD54. Interacts with KBTBD10. Post-translationally, phosphorylated.

The protein resides in the cytoplasm. It localises to the cell cortex. It is found in the cytoskeleton. Functionally, plays an important role in the regulation of dynamic actin-based, cytoskeletal activities. Agonist-dependent changes in LASP1 phosphorylation may also serve to regulate actin-associated ion transport activities, not only in the parietal cell but also in certain other F-actin-rich secretory epithelial cell types. This is LIM and SH3 domain protein 1 (LASP1) from Bos taurus (Bovine).